Consider the following 164-residue polypeptide: UPF0304 protein YfbU (164 aa).

This sequence belongs to the UPF0304 family.

This Escherichia coli O139:H28 (strain E24377A / ETEC) protein is UPF0304 protein YfbU.